The primary structure comprises 210 residues: 2-hydroxy-3-keto-5-methylthiopentenyl-1-phosphate phosphatase (210 aa).

This sequence belongs to the HAD-like hydrolase superfamily. MtnX family.

The enzyme catalyses 2-hydroxy-5-methylsulfanyl-3-oxopent-1-enyl phosphate + H2O = 1,2-dihydroxy-5-(methylsulfanyl)pent-1-en-3-one + phosphate. Its pathway is amino-acid biosynthesis; L-methionine biosynthesis via salvage pathway; L-methionine from S-methyl-5-thio-alpha-D-ribose 1-phosphate: step 4/6. Its function is as follows. Dephosphorylates 2-hydroxy-3-keto-5-methylthiopentenyl-1-phosphate (HK-MTPenyl-1-P) yielding 1,2-dihydroxy-3-keto-5-methylthiopentene (DHK-MTPene). This is 2-hydroxy-3-keto-5-methylthiopentenyl-1-phosphate phosphatase from Microcystis aeruginosa (strain NIES-843 / IAM M-2473).